Consider the following 196-residue polypeptide: dTTP/UTP pyrophosphatase (196 aa).

The active-site Proton acceptor is Asp-72.

Belongs to the Maf family. YhdE subfamily. It depends on a divalent metal cation as a cofactor.

Its subcellular location is the cytoplasm. It catalyses the reaction dTTP + H2O = dTMP + diphosphate + H(+). The enzyme catalyses UTP + H2O = UMP + diphosphate + H(+). Nucleoside triphosphate pyrophosphatase that hydrolyzes dTTP and UTP. May have a dual role in cell division arrest and in preventing the incorporation of modified nucleotides into cellular nucleic acids. This chain is dTTP/UTP pyrophosphatase, found in Chlamydia trachomatis serovar A (strain ATCC VR-571B / DSM 19440 / HAR-13).